The chain runs to 224 residues: UPF0758 protein mma_2551 (224 aa).

The MPN domain maps to 102 to 224 (SLNSPQAVKK…VYSFAEHGHL (123 aa)). Zn(2+)-binding residues include H173, H175, and D186. Residues 173-186 (HNHPSGSSEPSAAD) carry the JAMM motif motif.

The protein belongs to the UPF0758 family.

This chain is UPF0758 protein mma_2551, found in Janthinobacterium sp. (strain Marseille) (Minibacterium massiliensis).